A 461-amino-acid chain; its full sequence is Transforming growth factor beta-1-induced transcript 1 protein (461 aa).

Met-1 carries the post-translational modification N-acetylmethionine. A disordered region spans residues 1-86 (MEDLDALLSD…PPFSSSSGVL (86 aa)). The tract at residues 1-200 (MEDLDALLSD…GCPSPPGQTN (200 aa)) is transcription activation. The tract at residues 1 to 240 (MEDLDALLSD…CNKPIAGQVV (240 aa)) is interaction with PTK2B/PYK2. The short motif at 3-15 (DLDALLSDLETTT) is the LD motif 1 element. The residue at position 33 (Thr-33) is a Phosphothreonine. Phosphotyrosine is present on Tyr-38. Polar residues predominate over residues 41–52 (QPQTGSGESSGA). Tyr-60 is subject to Phosphotyrosine; by FAK2 and FYN. Ser-68 carries the phosphoserine modification. The segment covering 69–83 (PKSVAPVAPPFSSSS) has biased composition (low complexity). Residues 83–136 (SGVLGNGLCELDRLLQELNATQFNITDEIMSQFPSSKMAEGEGKEDQSEDKSIT) are interaction with PTK2/FAK1. The LD motif 2 motif lies at 92 to 104 (ELDRLLQELNATQ). A disordered region spans residues 116-154 (PSSKMAEGEGKEDQSEDKSITTVPSSTFPAPSKPSATSA). The span at 121-134 (AEGEGKEDQSEDKS) shows a compositional bias: basic and acidic residues. Positions 135-154 (ITTVPSSTFPAPSKPSATSA) are enriched in polar residues. A phosphoserine mark is found at Ser-140, Ser-141, Ser-164, and Ser-186. The LD motif 3 motif lies at 157–168 (ELDRLMASLSDF). The interval 171–204 (QNHLPASGPPQPPAVSPTREGCPSPPGQTNKGSL) is disordered. Phosphothreonine is present on Thr-188. Position 194 is a phosphoserine (Ser-194). Residues 203–215 (SLDTMLGLLQSDL) carry the LD motif 4 motif. 4 LIM zinc-binding domains span residues 226–285 (GLCG…RFSP), 286–343 (RCGF…QLFA), 344–403 (PRCQ…QRGS), and 404–461 (LCAT…KLFG). Ser-403 is subject to Phosphoserine. At Thr-407 the chain carries Phosphothreonine.

This sequence belongs to the paxillin family. As to quaternary structure, homooligomer. Interacts with PPARG. Interacts with TRAF4. Interacts with CRIP2. Interacts with HSPB1. Interacts with ILK. Interacts with LIMS1 and LIMS2. Interacts with NCK2. Interacts with NUDT16L1. Interacts with PAK. Interacts with PTPN12. Interacts with TCF3. Interacts with TCF7L2. Interacts with VCL. Interacts (via LD motif 3) with GIT1. Also interacts with GIT2. Forms a complex with ARHGEF7. Interacts with AR/androgen receptor in a ligand-dependent manner. Interacts with CSK. Interacts with PTK2/FAK1 and PTK2B/PYK2. Interacts with SLC6A3 and SLC6A4. Interacts with NR3C1. Interacts with SMAD3. Interacts with MAPK15. Interacts with SRC. Interacts with LYN. Interacts with talin. Interacts (via LIM zinc-binding domain 2) with CBLC (via RING-type zinc finger); the interaction is direct and enhances CBLC E3 ubiquitin-protein ligase activity. Interacts with PARVA. Interacts with PXN. Post-translationally, phosphorylated by gonadotropin-releasing hormone-activated SRC. Strongly expressed in large intestine, lung, spleen, testis, uterus and to a lower extent in brain, kidney and liver (at protein level). In brain, expressed by neuronal and non neuronal cells (at protein level).

The protein localises to the cell junction. It localises to the focal adhesion. The protein resides in the nucleus matrix. Its subcellular location is the cytoplasm. It is found in the cytoskeleton. Functions as a molecular adapter coordinating multiple protein-protein interactions at the focal adhesion complex and in the nucleus. Links various intracellular signaling modules to plasma membrane receptors and regulates the Wnt and TGFB signaling pathways. May also regulate SLC6A3 and SLC6A4 targeting to the plasma membrane hence regulating their activity. In the nucleus, functions as a nuclear receptor coactivator regulating glucocorticoid, androgen, mineralocorticoid and progesterone receptor transcriptional activity. May play a role in the processes of cell growth, proliferation, migration, differentiation and senescence. May have a zinc-dependent DNA-binding activity. The polypeptide is Transforming growth factor beta-1-induced transcript 1 protein (Tgfb1i1) (Rattus norvegicus (Rat)).